The chain runs to 313 residues: tRNA dimethylallyltransferase (313 aa).

11–18 (GPTAAGKS) lines the ATP pocket. 13–18 (TAAGKS) contributes to the substrate binding site. Interaction with substrate tRNA regions lie at residues 36-39 (DSAT), 160-164 (QRIQR), and 244-249 (RCVGYR).

This sequence belongs to the IPP transferase family. As to quaternary structure, monomer. Mg(2+) serves as cofactor.

It catalyses the reaction adenosine(37) in tRNA + dimethylallyl diphosphate = N(6)-dimethylallyladenosine(37) in tRNA + diphosphate. In terms of biological role, catalyzes the transfer of a dimethylallyl group onto the adenine at position 37 in tRNAs that read codons beginning with uridine, leading to the formation of N6-(dimethylallyl)adenosine (i(6)A). This chain is tRNA dimethylallyltransferase, found in Bordetella pertussis (strain Tohama I / ATCC BAA-589 / NCTC 13251).